Reading from the N-terminus, the 341-residue chain is Holliday junction branch migration complex subunit RuvB (341 aa).

The disordered stretch occupies residues 1–21; sequence MSQPDPMLRPEPLESDGEDRA. The segment at 4-183 is large ATPase domain (RuvB-L); it reads PDPMLRPEPL…FGIPTRLQFY (180 aa). Residues L22, R23, G64, K67, T68, T69, 130-132, R173, Y183, and R220 each bind ATP; that span reads EDF. T68 provides a ligand contact to Mg(2+). Residues 184-254 form a small ATPAse domain (RuvB-S) region; it reads TIEELDLIVT…IADSALTRLG (71 aa). A head domain (RuvB-H) region spans residues 257-341; it reads HLGLDTADRR…PRTQESLFDE (85 aa). 3 residues coordinate DNA: R293, R312, and R317.

It belongs to the RuvB family. Homohexamer. Forms an RuvA(8)-RuvB(12)-Holliday junction (HJ) complex. HJ DNA is sandwiched between 2 RuvA tetramers; dsDNA enters through RuvA and exits via RuvB. An RuvB hexamer assembles on each DNA strand where it exits the tetramer. Each RuvB hexamer is contacted by two RuvA subunits (via domain III) on 2 adjacent RuvB subunits; this complex drives branch migration. In the full resolvosome a probable DNA-RuvA(4)-RuvB(12)-RuvC(2) complex forms which resolves the HJ.

The protein localises to the cytoplasm. The enzyme catalyses ATP + H2O = ADP + phosphate + H(+). Its function is as follows. The RuvA-RuvB-RuvC complex processes Holliday junction (HJ) DNA during genetic recombination and DNA repair, while the RuvA-RuvB complex plays an important role in the rescue of blocked DNA replication forks via replication fork reversal (RFR). RuvA specifically binds to HJ cruciform DNA, conferring on it an open structure. The RuvB hexamer acts as an ATP-dependent pump, pulling dsDNA into and through the RuvAB complex. RuvB forms 2 homohexamers on either side of HJ DNA bound by 1 or 2 RuvA tetramers; 4 subunits per hexamer contact DNA at a time. Coordinated motions by a converter formed by DNA-disengaged RuvB subunits stimulates ATP hydrolysis and nucleotide exchange. Immobilization of the converter enables RuvB to convert the ATP-contained energy into a lever motion, pulling 2 nucleotides of DNA out of the RuvA tetramer per ATP hydrolyzed, thus driving DNA branch migration. The RuvB motors rotate together with the DNA substrate, which together with the progressing nucleotide cycle form the mechanistic basis for DNA recombination by continuous HJ branch migration. Branch migration allows RuvC to scan DNA until it finds its consensus sequence, where it cleaves and resolves cruciform DNA. The protein is Holliday junction branch migration complex subunit RuvB of Paracoccus denitrificans (strain Pd 1222).